Consider the following 144-residue polypeptide: Endoribonuclease YbeY (144 aa).

Residues H104, H108, and H114 each coordinate Zn(2+).

Belongs to the endoribonuclease YbeY family. The cofactor is Zn(2+).

It localises to the cytoplasm. Its function is as follows. Single strand-specific metallo-endoribonuclease involved in late-stage 70S ribosome quality control and in maturation of the 3' terminus of the 16S rRNA. This Nitratiruptor sp. (strain SB155-2) protein is Endoribonuclease YbeY.